The following is a 245-amino-acid chain: Eukaryotic translation initiation factor 6 (245 aa).

Residues serine 174 and serine 175 each carry the phosphoserine; by CK1 modification.

Belongs to the eIF-6 family. As to quaternary structure, monomer. Associates with the 60S ribosomal subunit. Post-translationally, phosphorylation at Ser-174 and Ser-175 promotes nuclear export.

The protein localises to the cytoplasm. The protein resides in the nucleus. It localises to the nucleolus. Its function is as follows. Binds to the 60S ribosomal subunit and prevents its association with the 40S ribosomal subunit to form the 80S initiation complex in the cytoplasm. Is also involved in ribosome biogenesis. Associates with pre-60S subunits in the nucleus and is involved in its nuclear export. The polypeptide is Eukaryotic translation initiation factor 6 (Candida albicans (strain SC5314 / ATCC MYA-2876) (Yeast)).